The chain runs to 259 residues: UPF0246 protein PFL_1025 (259 aa).

The protein belongs to the UPF0246 family.

This is UPF0246 protein PFL_1025 from Pseudomonas fluorescens (strain ATCC BAA-477 / NRRL B-23932 / Pf-5).